The following is a 248-amino-acid chain: Spherulin-1B (248 aa).

The first 20 residues, 1 to 20 (MQVRNILVALVVVCFAVSEA), serve as a signal peptide directing secretion. The Cupin type-1 domain maps to 61-207 (FDFKNSKLGV…SLNISSIQTV (147 aa)). Mn(2+) contacts are provided by His-110, His-112, Glu-117, and His-157. The N-linked (GlcNAc...) asparagine glycan is linked to Asn-200.

It belongs to the germin family.

Its subcellular location is the secreted. The protein resides in the cell wall. The protein is Spherulin-1B of Physarum polycephalum (Slime mold).